Consider the following 747-residue polypeptide: ATPase family gene 2 protein homolog B (747 aa).

Position 1 is an N-acetylmethionine (M1). ATP is bound by residues 234–241 and 500–507; these read GPPGVGKT and GPPGCAKT.

It belongs to the AAA ATPase family. AFG2 subfamily. Part of the 55LCC heterohexameric ATPase complex composed at least of AIRIM, AFG2A, AFG2B and CINP. Associates with pre-60S ribosomal particles. In terms of tissue distribution, expressed in neurons; also expressed at lower level in astrocytes, oligodendrocytes and microglia.

Its subcellular location is the cytoplasm. The protein resides in the cytoskeleton. The protein localises to the spindle. It is found in the nucleus. The catalysed reaction is ATP + H2O = ADP + phosphate + H(+). With respect to regulation, in the context of 55LCC heterohexameric ATPase complex, the ATPase activity is stimulated by DNA binding and inhibited in presence of RNA. Its function is as follows. ATP-dependent chaperone part of the 55LCC heterohexameric ATPase complex which is chromatin-associated and promotes replisome proteostasis to maintain replication fork progression and genome stability. Required for replication fork progression, sister chromatid cohesion, and chromosome stability. The ATPase activity is specifically enhanced by replication fork DNA and is coupled to cysteine protease-dependent cleavage of replisome substrates in response to replication fork damage. Uses ATPase activity to process replisome substrates in S-phase, facilitating their proteolytic turnover from chromatin to ensure DNA replication and mitotic fidelity. Plays an essential role in the cytoplasmic maturation steps of pre-60S ribosomal particles by promoting the release of shuttling protein RSL24D1/RLP24 from the pre-ribosomal particles. This is ATPase family gene 2 protein homolog B (Afg2b) from Rattus norvegicus (Rat).